Reading from the N-terminus, the 520-residue chain is MFAQPYDHSFNDLFNQYVNMETSAVDGKDSALSDFDQLFPLDSLSSDCGDLPPTVSTPKRHQSPQPWSNEWSLQDDGAAADHFAFHDTVHPSAISDVNLNNFEVPSRPTASHGLSTSPSTPPATPRRKPTQSALITPKSIRHRSPNERRSHLRKQSFSPSLMRSSNLSKARMAYPEAWAQRLQNFSLHGSEDRLPLSPPPSDVLIQHENMPTEQIMNQHGDSAERPSQYDARLYQQSPSVSMPSPSIAMSARQQQHYIAQPSSSSLTNSSPSSADDIFSSSHSSDPHSLSSWQSDPLHASSLSFTPDLQGQDSQWWSPMPSRVAQQQAAYLTSPTPVRTMQSVGSQNDMMQGGLMIQFNPSYDMSADHSFSSSNMLPATPQKFDTSFNTSQVHNVSRSPSLSPKAGTSPRDTRNGSISKPTHRRTHSRKLSGQSMNAPKPAKASGSSSRGSNKSVSVSFVNFTAHDSKKILTGVAPSGSSKTKARREQEARDRRRKLSEAALRAVRSAGGDVEALEAVLC.

5 disordered regions span residues 49-72, 104-165, 236-295, 367-453, and 471-496; these read GDLP…NEWS, VPSR…MRSS, QSPS…WQSD, DHSF…GSNK, and LTGV…RRRK. Composition is skewed to polar residues over residues 63–72, 104–114, and 155–165; these read SPQPWSNEWS, VPSRPTASHGL, and QSFSPSLMRSS. Low complexity predominate over residues 237–251; it reads SPSVSMPSPSIAMSA. The span at 252–261 shows a compositional bias: polar residues; sequence RQQQHYIAQP. The span at 262–295 shows a compositional bias: low complexity; sequence SSSSLTNSSPSSADDIFSSSHSSDPHSLSSWQSD. Polar residues predominate over residues 367-401; sequence DHSFSSSNMLPATPQKFDTSFNTSQVHNVSRSPSL. Positions 420 to 429 are enriched in basic residues; it reads PTHRRTHSRK. Positions 436 to 453 are enriched in low complexity; sequence NAPKPAKASGSSSRGSNK.

It belongs to the wetA family.

Functionally, brlA, abaA and wetA are pivotal regulators of conidiophore development and conidium maturation. They act individually and together to regulate their own expression and that of numerous other sporulation-specific genes. Responsible for activating a set of genes whose products make up the final two conidial wall layers or direct their assembly and though this activity is responsible for acquisition of spore dormancy. The protein is Developmental regulatory protein wetA of Penicillium rubens (strain ATCC 28089 / DSM 1075 / NRRL 1951 / Wisconsin 54-1255) (Penicillium chrysogenum).